The primary structure comprises 41 residues: Large ribosomal subunit protein bL36 (41 aa).

Belongs to the bacterial ribosomal protein bL36 family.

This chain is Large ribosomal subunit protein bL36, found in Rhizobium etli (strain CIAT 652).